Here is a 279-residue protein sequence, read N- to C-terminus: 3-methyl-2-oxobutanoate hydroxymethyltransferase (279 aa).

Residues Asp53 and Asp92 each coordinate Mg(2+). Residues 53-54 (DS), Asp92, and Lys122 each bind 3-methyl-2-oxobutanoate. Glu124 contacts Mg(2+). The Proton acceptor role is filled by Glu191.

This sequence belongs to the PanB family. In terms of assembly, homodecamer; pentamer of dimers. Mg(2+) serves as cofactor.

Its subcellular location is the cytoplasm. The catalysed reaction is 3-methyl-2-oxobutanoate + (6R)-5,10-methylene-5,6,7,8-tetrahydrofolate + H2O = 2-dehydropantoate + (6S)-5,6,7,8-tetrahydrofolate. It participates in cofactor biosynthesis; (R)-pantothenate biosynthesis; (R)-pantoate from 3-methyl-2-oxobutanoate: step 1/2. Catalyzes the reversible reaction in which hydroxymethyl group from 5,10-methylenetetrahydrofolate is transferred onto alpha-ketoisovalerate to form ketopantoate. The polypeptide is 3-methyl-2-oxobutanoate hydroxymethyltransferase (Maricaulis maris (strain MCS10) (Caulobacter maris)).